Here is a 379-residue protein sequence, read N- to C-terminus: UPF0754 membrane protein ABC1518 (379 aa).

Helical transmembrane passes span 1–21 (MHWI…GAAT) and 358–378 (LLGG…VHFF).

Belongs to the UPF0754 family.

Its subcellular location is the cell membrane. The chain is UPF0754 membrane protein ABC1518 from Shouchella clausii (strain KSM-K16) (Alkalihalobacillus clausii).